Here is a 590-residue protein sequence, read N- to C-terminus: Polypeptide N-acetylgalactosaminyltransferase 8 (590 aa).

The Cytoplasmic portion of the chain corresponds to 1–11 (MCLDIWRHKKK). Residues 12–31 (VLPLLLLMAIGSIIYYLYTL) traverse the membrane as a helical; Signal-anchor for type II membrane protein segment. Over 32–590 (KLEGERDESA…QHFWDNVKTQ (559 aa)) the chain is Lumenal. The N-linked (GlcNAc...) asparagine glycan is linked to asparagine 77. 5 disulfide bridges follow: cysteine 117–cysteine 345, cysteine 336–cysteine 419, cysteine 459–cysteine 475, cysteine 502–cysteine 517, and cysteine 546–cysteine 561. Residues 127-236 (LPSVSVVITY…KGWLEPLIAP (110 aa)) are catalytic subdomain A. Aspartate 168 provides a ligand contact to substrate. Aspartate 220 is a Mn(2+) binding site. Serine 221 contributes to the substrate binding site. Histidine 222 contributes to the Mn(2+) binding site. Residue asparagine 241 is glycosylated (N-linked (GlcNAc...) asparagine). Residues 291–353 (PHKNPIMNGG…PCSRVGHLFR (63 aa)) form a catalytic subdomain B region. Tryptophan 322 serves as a coordination point for substrate. Histidine 350 is a binding site for Mn(2+). Position 353 (arginine 353) interacts with substrate. The 128-residue stretch at 446 to 573 (ASGVLQSISS…KNHKQQWKFG (128 aa)) folds into the Ricin B-type lectin domain.

It belongs to the glycosyltransferase 2 family. GalNAc-T subfamily. It depends on Mn(2+) as a cofactor. Expressed in developing oocytes and egg chambers. During embryonic stages 9-11, expressed in the primordium of the foregut, midgut and hindgut. During embryonic stages 12-13, expressed in the posterior midgut and hindgut. During embryonic stages 14-15, expression continues in the hindgut. No expression detected during embryonic stages 16-17 or in third instar larvae imaginal disks.

The protein resides in the golgi apparatus membrane. It carries out the reaction L-seryl-[protein] + UDP-N-acetyl-alpha-D-galactosamine = a 3-O-[N-acetyl-alpha-D-galactosaminyl]-L-seryl-[protein] + UDP + H(+). The enzyme catalyses L-threonyl-[protein] + UDP-N-acetyl-alpha-D-galactosamine = a 3-O-[N-acetyl-alpha-D-galactosaminyl]-L-threonyl-[protein] + UDP + H(+). The protein operates within protein modification; protein glycosylation. Catalyzes the initial reaction in O-linked oligosaccharide biosynthesis, the transfer of an N-acetyl-D-galactosamine residue to a serine or threonine residue on the protein receptor. It can both act as a peptide transferase that transfers GalNAc onto unmodified peptide substrates, and as a glycopeptide transferase that requires the prior addition of a GalNAc on a peptide before adding additional GalNAc moieties. Prefers both EA2 and the diglycosylated Muc5AC-3/13 as substrates, albeit at very low levels fro Muc5AC-3/13. The sequence is that of Polypeptide N-acetylgalactosaminyltransferase 8 from Drosophila melanogaster (Fruit fly).